We begin with the raw amino-acid sequence, 1779 residues long: 5-methyl-1-naphthoate synthase (1779 aa).

Residues 10–433 enclose the Ketosynthase family 3 (KS3) domain; the sequence is VEPLAVIGMS…GSIAHAVLQQ (424 aa). Catalysis depends on for beta-ketoacyl synthase activity residues Cys181, His316, and His356. An N-terminal hotdog fold region spans residues 902-1027; that stretch reads HTLIGARTTV…ATVVHEPEVG (126 aa). The region spanning 902 to 1180 is the PKS/mFAS DH domain; it reads HTLIGARTTV…YVKVQDIGSG (279 aa). The tract at residues 1042-1180 is C-terminal hotdog fold; it reads PVSWTWAKVD…YVKVQDIGSG (139 aa). The region spanning 1664–1742 is the Carrier domain; that stretch reads GELPELVLKV…ALAEFLAAEV (79 aa). Ser1702 is modified (O-(pantetheine 4'-phosphoryl)serine). The tract at residues 1746–1771 is disordered; it reads TADAEETDPVAGLPAPQQGSGTAEQL.

It catalyses the reaction 5 malonyl-CoA + acetyl-CoA + 3 NADPH + 7 H(+) = 5-methyl-1-naphthoate + 5 CO2 + 3 NADP(+) + 6 CoA + 4 H2O. Its pathway is antibiotic biosynthesis. Functionally, polyketide synthase that catalyzes the biosynthesis of the bicyclic aromatic compound 5-methyl-1-naphthoate in the biosynthesis of the antitumor antibiotic azinomycin B. This chain is 5-methyl-1-naphthoate synthase, found in Streptomyces sahachiroi.